The sequence spans 257 residues: Chymotrypsin-like protease VLCTLP (257 aa).

Residues 1–18 (MVLIRVLANLLLLQLSYA) form the signal peptide. Residues 19–24 (QKSSEL) constitute a propeptide that is removed on maturation. Residues 25-248 (VVGGDECNIN…YSDWIQSIIA (224 aa)) form the Peptidase S1 domain. 6 disulfide bridges follow: cysteine 31/cysteine 162, cysteine 49/cysteine 65, cysteine 97/cysteine 255, cysteine 141/cysteine 209, cysteine 173/cysteine 188, and cysteine 199/cysteine 224. Asparagine 44 is a glycosylation site (N-linked (GlcNAc...) asparagine). Histidine 64 (charge relay system) is an active-site residue. Asparagine 100 carries N-linked (GlcNAc...) asparagine glycosylation. Aspartate 109 functions as the Charge relay system in the catalytic mechanism. 2 N-linked (GlcNAc...) asparagine glycosylation sites follow: asparagine 116 and asparagine 153. The active-site Charge relay system is serine 203. A glycan (N-linked (GlcNAc...) asparagine) is linked at asparagine 250.

Belongs to the peptidase S1 family. Snake venom subfamily. In terms of assembly, monomer. In terms of processing, partial deglycosylation has not effect on enzyme activity. In terms of tissue distribution, expressed by the venom gland.

The protein resides in the secreted. Inhibited by PMSF. Snake venom serine protease with tyrosine-specific chymotrypsin-like activity. Hydrolyzes the N-acetyl-L-tyrosine ethyl ester (ATEE). Has weak fibrinogenolytic activity. Weakly hydrolyzes azocasein, Aalpha-chain (FGA) and more slowly Bbeta-chain (FGB) of fibrinogen. Optimal substrates are angiotensins I and II (AGT). This is Chymotrypsin-like protease VLCTLP from Macrovipera lebetinus (Levantine viper).